The sequence spans 558 residues: 2-isopropylmalate synthase (558 aa).

One can recognise a Pyruvate carboxyltransferase domain in the interval 30-303 (PIWCSVDLRD…DPKLDCSDIE (274 aa)). Residues aspartate 39, histidine 242, histidine 244, and asparagine 278 each contribute to the Mg(2+) site. Positions 437-558 (QPGARIKFVD…ANRVLDVVGK (122 aa)) are regulatory domain.

This sequence belongs to the alpha-IPM synthase/homocitrate synthase family. LeuA type 2 subfamily. In terms of assembly, homodimer. Requires Mg(2+) as cofactor.

It localises to the cytoplasm. It carries out the reaction 3-methyl-2-oxobutanoate + acetyl-CoA + H2O = (2S)-2-isopropylmalate + CoA + H(+). Its pathway is amino-acid biosynthesis; L-leucine biosynthesis; L-leucine from 3-methyl-2-oxobutanoate: step 1/4. Functionally, catalyzes the condensation of the acetyl group of acetyl-CoA with 3-methyl-2-oxobutanoate (2-ketoisovalerate) to form 3-carboxy-3-hydroxy-4-methylpentanoate (2-isopropylmalate). This Rhizobium meliloti (strain 1021) (Ensifer meliloti) protein is 2-isopropylmalate synthase.